The sequence spans 50 residues: Photosystem II reaction center protein M (50 aa).

A helical transmembrane segment spans residues 7 to 27; sequence GFVASLLFVGVPTIFLIGLFI.

Belongs to the PsbM family. PSII is composed of 1 copy each of membrane proteins PsbA, PsbB, PsbC, PsbD, PsbE, PsbF, PsbH, PsbI, PsbJ, PsbK, PsbL, PsbM, PsbT, PsbX, PsbY, Psb30/Ycf12, peripheral proteins PsbO, CyanoQ (PsbQ), PsbU, PsbV and a large number of cofactors. It forms dimeric complexes.

The protein localises to the cellular thylakoid membrane. Its function is as follows. One of the components of the core complex of photosystem II (PSII). PSII is a light-driven water:plastoquinone oxidoreductase that uses light energy to abstract electrons from H(2)O, generating O(2) and a proton gradient subsequently used for ATP formation. It consists of a core antenna complex that captures photons, and an electron transfer chain that converts photonic excitation into a charge separation. This subunit is found at the monomer-monomer interface. In Prochlorococcus marinus (strain MIT 9515), this protein is Photosystem II reaction center protein M.